Consider the following 94-residue polypeptide: Acylphosphatase (94 aa).

One can recognise an Acylphosphatase-like domain in the interval R5 to R94. Catalysis depends on residues R20 and N38.

It belongs to the acylphosphatase family.

It carries out the reaction an acyl phosphate + H2O = a carboxylate + phosphate + H(+). The polypeptide is Acylphosphatase (acyP) (Corynebacterium glutamicum (strain ATCC 13032 / DSM 20300 / JCM 1318 / BCRC 11384 / CCUG 27702 / LMG 3730 / NBRC 12168 / NCIMB 10025 / NRRL B-2784 / 534)).